The sequence spans 138 residues: High mobility group B protein 4 (138 aa).

2 disordered regions span residues 1–41 (MKGG…PPSA) and 105–138 (LKLA…EDDD). The segment covering 18-29 (KTRGRKAGKKTK) has biased composition (basic residues). A DNA-binding region (HMG box) is located at residues 35–104 (PKRPPSAFFV…EYIKNVQQYN (70 aa)). A phosphoserine mark is found at serine 123 and serine 130. Positions 126 to 138 (DEAVSEEEAEDDD) are enriched in acidic residues.

Belongs to the HMGB family. Mostly expressed roots and flowers, and, to a lower extent, in stems and leaves.

The protein resides in the nucleus. The protein localises to the cytoplasm. Its subcellular location is the cytosol. Its function is as follows. Binds preferentially double-stranded DNA. This Arabidopsis thaliana (Mouse-ear cress) protein is High mobility group B protein 4 (HMGB4).